The primary structure comprises 167 residues: Large ribosomal subunit protein bL9 (167 aa).

Belongs to the bacterial ribosomal protein bL9 family.

Functionally, binds to the 23S rRNA. The sequence is that of Large ribosomal subunit protein bL9 from Nitratidesulfovibrio vulgaris (strain DSM 19637 / Miyazaki F) (Desulfovibrio vulgaris).